A 339-amino-acid polypeptide reads, in one-letter code: tRNA pseudouridine synthase D (339 aa).

Catalysis depends on D80, which acts as the Nucleophile. Residues 155–311 form the TRUD domain; the sequence is GFPNYFTEQR…AKGFSWAFEL (157 aa).

It belongs to the pseudouridine synthase TruD family.

The catalysed reaction is uridine(13) in tRNA = pseudouridine(13) in tRNA. In terms of biological role, responsible for synthesis of pseudouridine from uracil-13 in transfer RNAs. The chain is tRNA pseudouridine synthase D from Haemophilus influenzae (strain PittEE).